We begin with the raw amino-acid sequence, 399 residues long: Acetate kinase (399 aa).

Asn10 is a Mg(2+) binding site. Lys17 is an ATP binding site. Arg91 lines the substrate pocket. Asp150 functions as the Proton donor/acceptor in the catalytic mechanism. ATP contacts are provided by residues 210–214 (HLGNG), 285–287 (DFR), and 333–337 (GIGEN). Residue Glu387 participates in Mg(2+) binding.

Belongs to the acetokinase family. Homodimer. Mg(2+) is required as a cofactor. Requires Mn(2+) as cofactor.

The protein localises to the cytoplasm. It catalyses the reaction acetate + ATP = acetyl phosphate + ADP. It participates in metabolic intermediate biosynthesis; acetyl-CoA biosynthesis; acetyl-CoA from acetate: step 1/2. In terms of biological role, catalyzes the formation of acetyl phosphate from acetate and ATP. Can also catalyze the reverse reaction. In Wigglesworthia glossinidia brevipalpis, this protein is Acetate kinase.